The following is a 309-amino-acid chain: General transcription factor IIH subunit 3 (309 aa).

Residues 269–286 (CSVCLSIFCNFSPICTTC) form a C4-type zinc finger.

The protein belongs to the TFB4 family. Part of a TFIID-containing RNA polymerase II pre-initiation complex that is composed of TBP and at least GTF2A1, GTF2A2, GTF2E1, GTF2E2, GTF2F1, GTF2H2, GTF2H3, GTF2H4, GTF2H5, GTF2B, TCEA1, ERCC2, ERCC3, TAF1, TAF2, TAF3, TAF4, TAF5, TAF6, TAF7, TAF8, TAF9, TAF10, TAF11, TAF12 and TAF13. Component of the 7-subunit TFIIH core complex composed of XPB/ERCC3, XPD/ERCC2, GTF2H1, GTF2H2, GTF2H3, GTF2H4 and GTF2H5, which is active in NER. The core complex associates with the 3-subunit CDK-activating kinase (CAK) module composed of CCNH/cyclin H, CDK7 and MNAT1 to form the 10-subunit holoenzyme (holo-TFIIH) active in transcription. Interacts with RARA; the interaction requires prior phosphorylation of RARA on 'Ser-369' which then enhances interaction of RARA with CDK7.

The protein localises to the nucleus. Functionally, component of the general transcription and DNA repair factor IIH (TFIIH) core complex, which is involved in general and transcription-coupled nucleotide excision repair (NER) of damaged DNA and, when complexed to CAK, in RNA transcription by RNA polymerase II. In NER, TFIIH acts by opening DNA around the lesion to allow the excision of the damaged oligonucleotide and its replacement by a new DNA fragment. In transcription, TFIIH has an essential role in transcription initiation. When the pre-initiation complex (PIC) has been established, TFIIH is required for promoter opening and promoter escape. Phosphorylation of the C-terminal tail (CTD) of the largest subunit of RNA polymerase II by the kinase module CAK controls the initiation of transcription. The sequence is that of General transcription factor IIH subunit 3 (Gtf2h3) from Rattus norvegicus (Rat).